Reading from the N-terminus, the 22-residue chain is CVQQNKKSRSARDMXXSXDALE.

Residues 1-22 are disordered; it reads CVQQNKKSRSARDMXXSXDALE. Residues 13-22 show a composition bias toward low complexity; that stretch reads DMXXSXDALE.

Belongs to the bacterial ribosomal protein bL32 family.

This chain is Large ribosomal subunit protein bL32 (rpmF), found in Ectopseudomonas mendocina (Pseudomonas mendocina).